The sequence spans 289 residues: Pre-mRNA-splicing factor cwf23 (289 aa).

The 66-residue stretch at aspartate 9–arginine 74 folds into the J domain. A compositionally biased stretch (basic and acidic residues) spans glutamate 129–serine 148. 2 disordered regions span residues glutamate 129–serine 161 and lysine 269–alanine 289.

This sequence belongs to the DnaJ family. Belongs to the 40S cdc5-associated complex (or cwf complex), a spliceosome sub-complex reminiscent of a late-stage spliceosome composed of the U2, U5 and U6 snRNAs and at least brr2, cdc5, cwf2/prp3, cwf3/syf1, cwf4/syf3, cwf5/ecm2, spp42/cwf6, cwf7/spf27, cwf8, cwf9, cwf10, cwf11, cwf12, prp45/cwf13, cwf14, cwf15, cwf16, cwf17, cwf18, cwf19, cwf20, cwf21, cwf22, cwf23, cwf24, cwf25, cwf26, cyp7/cwf27, cwf28, cwf29/ist3, lea1, msl1, prp5/cwf1, prp10, prp12/sap130, prp17, prp22, sap61, sap62, sap114, sap145, slu7, smb1, smd1, smd3, smf1, smg1 and syf2.

The protein resides in the cytoplasm. The protein localises to the nucleus. Functionally, involved in pre-mRNA splicing. May be involved in endoplasmic reticulum-associated protein degradation (ERAD) and required for growth at low and high temperatures. This is Pre-mRNA-splicing factor cwf23 (cwf23) from Schizosaccharomyces pombe (strain 972 / ATCC 24843) (Fission yeast).